The following is a 255-amino-acid chain: Trans-aconitate 2-methyltransferase (255 aa).

Belongs to the methyltransferase superfamily. Tam family.

The protein resides in the cytoplasm. The enzyme catalyses trans-aconitate + S-adenosyl-L-methionine = (E)-3-(methoxycarbonyl)pent-2-enedioate + S-adenosyl-L-homocysteine. Its function is as follows. Catalyzes the S-adenosylmethionine monomethyl esterification of trans-aconitate. In Mycolicibacterium gilvum (strain PYR-GCK) (Mycobacterium gilvum (strain PYR-GCK)), this protein is Trans-aconitate 2-methyltransferase.